The following is a 229-amino-acid chain: Putative ankyrin repeat protein L148 (229 aa).

ANK repeat units lie at residues 70 to 95, 96 to 126, 127 to 156, and 157 to 186; these read ILDY…PDNY, IGTE…DLRI, NNDY…NCQA, and YNNA…SVAA.

The chain is Putative ankyrin repeat protein L148 from Acanthamoeba polyphaga (Amoeba).